The following is a 284-amino-acid chain: Nucleotide-binding protein Sputw3181_3461 (284 aa).

ATP is bound at residue 8 to 15 (GRSGSGKS). Position 56 to 59 (56 to 59 (DVRN)) interacts with GTP.

It belongs to the RapZ-like family.

Functionally, displays ATPase and GTPase activities. The protein is Nucleotide-binding protein Sputw3181_3461 of Shewanella sp. (strain W3-18-1).